Here is a 349-residue protein sequence, read N- to C-terminus: Phenylalanine--tRNA ligase alpha subunit (349 aa).

A Mg(2+)-binding site is contributed by Glu-264.

This sequence belongs to the class-II aminoacyl-tRNA synthetase family. Phe-tRNA synthetase alpha subunit type 1 subfamily. As to quaternary structure, tetramer of two alpha and two beta subunits. It depends on Mg(2+) as a cofactor.

Its subcellular location is the cytoplasm. The catalysed reaction is tRNA(Phe) + L-phenylalanine + ATP = L-phenylalanyl-tRNA(Phe) + AMP + diphosphate + H(+). The sequence is that of Phenylalanine--tRNA ligase alpha subunit from Myxococcus xanthus (strain DK1622).